A 584-amino-acid polypeptide reads, in one-letter code: DNA ligase (584 aa).

Glutamate 249 is a binding site for ATP. The N6-AMP-lysine intermediate role is filled by lysine 251. ATP contacts are provided by arginine 256, arginine 271, glutamate 301, phenylalanine 341, arginine 416, and lysine 422.

This sequence belongs to the ATP-dependent DNA ligase family. Mg(2+) serves as cofactor.

It catalyses the reaction ATP + (deoxyribonucleotide)n-3'-hydroxyl + 5'-phospho-(deoxyribonucleotide)m = (deoxyribonucleotide)n+m + AMP + diphosphate.. In terms of biological role, DNA ligase that seals nicks in double-stranded DNA during DNA replication, DNA recombination and DNA repair. The polypeptide is DNA ligase (Pyrobaculum arsenaticum (strain DSM 13514 / JCM 11321 / PZ6)).